Reading from the N-terminus, the 470-residue chain is UDP-N-acetylmuramate--L-alanine ligase (470 aa).

Residue 118–124 (GTHGKTT) participates in ATP binding.

This sequence belongs to the MurCDEF family.

The protein localises to the cytoplasm. The enzyme catalyses UDP-N-acetyl-alpha-D-muramate + L-alanine + ATP = UDP-N-acetyl-alpha-D-muramoyl-L-alanine + ADP + phosphate + H(+). It functions in the pathway cell wall biogenesis; peptidoglycan biosynthesis. Functionally, cell wall formation. This is UDP-N-acetylmuramate--L-alanine ligase from Cereibacter sphaeroides (strain ATCC 17025 / ATH 2.4.3) (Rhodobacter sphaeroides).